Here is a 171-residue protein sequence, read N- to C-terminus: Methylated-DNA--protein-cysteine methyltransferase (171 aa).

Residue cysteine 139 is the Nucleophile; methyl group acceptor of the active site.

The protein belongs to the MGMT family.

It localises to the cytoplasm. It carries out the reaction a 6-O-methyl-2'-deoxyguanosine in DNA + L-cysteinyl-[protein] = S-methyl-L-cysteinyl-[protein] + a 2'-deoxyguanosine in DNA. It catalyses the reaction a 4-O-methyl-thymidine in DNA + L-cysteinyl-[protein] = a thymidine in DNA + S-methyl-L-cysteinyl-[protein]. Functionally, involved in the cellular defense against the biological effects of O6-methylguanine (O6-MeG) and O4-methylthymine (O4-MeT) in DNA. Repairs the methylated nucleobase in DNA by stoichiometrically transferring the methyl group to a cysteine residue in the enzyme. This is a suicide reaction: the enzyme is irreversibly inactivated. The sequence is that of Methylated-DNA--protein-cysteine methyltransferase from Shigella flexneri.